The sequence spans 318 residues: MESFPVINMEKMNGEERAATMGLINDACENWGFFELVNHGIPPELMDTVERVTKAHYKKCMEQRFKELVASKALEGIQAEVTDMDWESTYFLRHLPQSNISEVPDLDEEYRRVMKDFAERLEKLAEYLLDLLCENLGLEKGYLKKAFYGTKGPNFGTKVANYPPCPKADLIKGLRAHTDAGGIILLFQDDKVSGLQLLKDDQWIDVPPMKHSIVINLGDQLEVITNGKYKSVLHRVVAQTDGTRMSIASFYNPGNDAVIYPAPALVEKEVEEKEVYPKFVFDDYMKLYAALKFQAKEPRFEAMKAVEANVNLGPIATV.

The 101-residue stretch at Pro153–Pro253 folds into the Fe2OG dioxygenase domain. Fe cation is bound by residues His177, Asp179, and His234.

It belongs to the iron/ascorbate-dependent oxidoreductase family. Requires Fe cation as cofactor.

It catalyses the reaction 1-aminocyclopropane-1-carboxylate + L-ascorbate + O2 = ethene + L-dehydroascorbate + hydrogen cyanide + CO2 + 2 H2O. Its pathway is alkene biosynthesis; ethylene biosynthesis via S-adenosyl-L-methionine; ethylene from S-adenosyl-L-methionine: step 2/2. The chain is 1-aminocyclopropane-1-carboxylate oxidase (DK-ACO1) from Diospyros kaki (Kaki persimmon).